The primary structure comprises 147 residues: UPF0306 protein YhbP (147 aa).

It belongs to the UPF0306 family.

The sequence is that of UPF0306 protein YhbP from Escherichia coli O6:K15:H31 (strain 536 / UPEC).